The chain runs to 64 residues: Large ribosomal subunit protein eL37 (64 aa).

4 residues coordinate Zn(2+): cysteine 20, cysteine 23, cysteine 35, and cysteine 38. The segment at 20-38 (CRRCGRRAFHVRKKVCAAC) adopts a C4-type zinc-finger fold.

Belongs to the eukaryotic ribosomal protein eL37 family. The cofactor is Zn(2+).

In terms of biological role, binds to the 23S rRNA. This Methanococcus maripaludis (strain C6 / ATCC BAA-1332) protein is Large ribosomal subunit protein eL37.